A 363-amino-acid polypeptide reads, in one-letter code: GDP-fucose transporter 1 (363 aa).

The next 8 helical transmembrane spans lie at 33–55 (FLLRALQIALVVSLYWVTSISMV), 75–97 (VTFYQCLVTSLLCKGLSTLATCC), 110–129 (LKVARSVLPLSVVFIGMITF), 139–161 (VPFYNVGRSLTTVFNVLLSYLLL), 166–184 (SFYALLTCGVIIGGFWLGI), 194–213 (SLTGTIFGVLASLCVSLNAI), 226–248 (IWRLTFYNNVNACVLFLPLMIVL), and 263–285 (AHFWLMMTLGGLFGFAIGYVTGL).

The protein belongs to the TPT transporter family. SLC35C subfamily.

It localises to the golgi apparatus membrane. It carries out the reaction GMP(out) + GDP-beta-L-fucose(in) = GMP(in) + GDP-beta-L-fucose(out). In terms of biological role, antiporter specific for GDP-l-fucose and depending on the concomitant reverse transport of GMP. Involved in GDP-fucose import from the cytoplasm into the Golgi lumen. In Mus musculus (Mouse), this protein is GDP-fucose transporter 1 (Slc35c1).